The sequence spans 240 residues: tRNA (guanine-N(1)-)-methyltransferase (240 aa).

Residues glycine 111 and 130–135 (IGDYVI) each bind S-adenosyl-L-methionine.

The protein belongs to the RNA methyltransferase TrmD family. As to quaternary structure, homodimer.

It is found in the cytoplasm. It catalyses the reaction guanosine(37) in tRNA + S-adenosyl-L-methionine = N(1)-methylguanosine(37) in tRNA + S-adenosyl-L-homocysteine + H(+). Its function is as follows. Specifically methylates guanosine-37 in various tRNAs. The protein is tRNA (guanine-N(1)-)-methyltransferase of Mycoplasma capricolum subsp. capricolum (strain California kid / ATCC 27343 / NCTC 10154).